The chain runs to 899 residues: Conserved oligomeric Golgi complex subunit 3 (899 aa).

This sequence belongs to the COG3 family. Component of the conserved oligomeric Golgi complex which is composed of eight different subunits and is required for normal Golgi morphology and localization.

Its subcellular location is the golgi apparatus membrane. Its function is as follows. Involved in ER-Golgi transport. This is Conserved oligomeric Golgi complex subunit 3 from Aedes aegypti (Yellowfever mosquito).